A 324-amino-acid chain; its full sequence is NADH-ubiquinone oxidoreductase chain 1 (324 aa).

8 helical membrane-spanning segments follow: residues 9-29 (VLNP…LTLL), 75-95 (FLFL…WAPM), 106-126 (LGVL…LGSG), 146-166 (ISYE…TGGF), 177-197 (SIWL…STLA), 237-257 (ILLM…IPAL), 259-279 (ELTA…FLWV), and 299-319 (FLPM…ALAG).

Belongs to the complex I subunit 1 family.

It localises to the mitochondrion inner membrane. The enzyme catalyses a ubiquinone + NADH + 5 H(+)(in) = a ubiquinol + NAD(+) + 4 H(+)(out). Functionally, core subunit of the mitochondrial membrane respiratory chain NADH dehydrogenase (Complex I) that is believed to belong to the minimal assembly required for catalysis. Complex I functions in the transfer of electrons from NADH to the respiratory chain. The immediate electron acceptor for the enzyme is believed to be ubiquinone. In Thymallus arcticus (Arctic grayling), this protein is NADH-ubiquinone oxidoreductase chain 1 (MT-ND1).